We begin with the raw amino-acid sequence, 485 residues long: Inosine-5'-monophosphate dehydrogenase (485 aa).

CBS domains lie at 97–154 and 155–211; these read IIRD…VSDV and MVRD…PDAS. NAD(+) is bound by residues D246 and 295–297; that span reads GIG. Positions 297 and 299 each coordinate K(+). An IMP-binding site is contributed by S300. C302 serves as a coordination point for K(+). The active-site Thioimidate intermediate is C302. IMP contacts are provided by residues 335–337, 358–359, and 382–386; these read DGG, GS, and YRGMG. R398 (proton acceptor) is an active-site residue. E409 contributes to the IMP binding site. Residues E463, S464, and H465 each coordinate K(+).

Belongs to the IMPDH/GMPR family. In terms of assembly, homotetramer. K(+) is required as a cofactor.

It catalyses the reaction IMP + NAD(+) + H2O = XMP + NADH + H(+). It participates in purine metabolism; XMP biosynthesis via de novo pathway; XMP from IMP: step 1/1. Its activity is regulated as follows. Mycophenolic acid (MPA) is a non-competitive inhibitor that prevents formation of the closed enzyme conformation by binding to the same site as the amobile flap. In contrast, mizoribine monophosphate (MZP) is a competitive inhibitor that induces the closed conformation. MPA is a potent inhibitor of mammalian IMPDHs but a poor inhibitor of the bacterial enzymes. MZP is a more potent inhibitor of bacterial IMPDH. Its function is as follows. Catalyzes the conversion of inosine 5'-phosphate (IMP) to xanthosine 5'-phosphate (XMP), the first committed and rate-limiting step in the de novo synthesis of guanine nucleotides, and therefore plays an important role in the regulation of cell growth. The chain is Inosine-5'-monophosphate dehydrogenase from Thermoplasma acidophilum (strain ATCC 25905 / DSM 1728 / JCM 9062 / NBRC 15155 / AMRC-C165).